Consider the following 646-residue polypeptide: Stage V sporulation protein D (646 aa).

The active-site Acyl-ester intermediate is the Ser294. One can recognise a PASTA domain in the interval Asp580–Glu638.

It belongs to the transpeptidase family.

It is found in the cell membrane. The catalysed reaction is Preferential cleavage: (Ac)2-L-Lys-D-Ala-|-D-Ala. Also transpeptidation of peptidyl-alanyl moieties that are N-acyl substituents of D-alanine.. Its pathway is cell wall biogenesis; peptidoglycan biosynthesis. In terms of biological role, penicillin-binding protein with an unknown catalytic activity. May have a specialized role in the morphogenesis of spore cortex, which is a modified form of peptidoglycan. Spore cortex formation is determined primarily by the mother cell. The polypeptide is Stage V sporulation protein D (spoVD) (Bacillus subtilis (strain 168)).